The primary structure comprises 476 residues: MAPKQIRTIGQVSQYVCLLSKPVSPVSGQVRQFTSPVDASIPASKQKFVPSSGTYPKGFKVSGSHAGVKASNTSAPDLALVWSEEPCSAAAVFTTNKFQAAPVQVSSELIRKRNGNGIRGVIVNAGCANAVTGKKGLQDARSMSKKADECNGLKEEDSSTLVMSTGVIGQLLPIERILNKVPEAQSNLASTHAAWLRTARAICTTDTFPKLTSRSFSLPSSPDRTYSIAGMTKGAGMIHPNMATLLGIICTDAPIEAPVLQSLLSHSISRSFNSISVDGDTSTNDTVAILANGAAGGTPISSTGSKDYTAMQSILTQFTQSLAQLVVRDGEGATKFVTVRVKNSPSYTDAKCIASTIARSPLVKTALYGKDANWGRILCAVGYTPDLTPGTVVPERTSVSFKPADGSAELKLLVNGEPESVDEGRASSILQHEDLEIVVDLGGGASGEAGRGGEDAIYWFCDFSHEYVTINGDYRT.

The substrate site is built by threonine 204, lysine 233, threonine 244, glutamate 331, asparagine 471, and threonine 476. The active-site Nucleophile is the threonine 244.

The protein belongs to the ArgJ family. As to quaternary structure, heterodimer of an alpha and a beta chain. The alpha and beta chains are autoproteolytically processed from a single precursor protein within the mitochondrion.

It is found in the mitochondrion matrix. It carries out the reaction N(2)-acetyl-L-ornithine + L-glutamate = N-acetyl-L-glutamate + L-ornithine. It catalyses the reaction L-glutamate + acetyl-CoA = N-acetyl-L-glutamate + CoA + H(+). Its pathway is amino-acid biosynthesis; L-arginine biosynthesis; L-ornithine and N-acetyl-L-glutamate from L-glutamate and N(2)-acetyl-L-ornithine (cyclic): step 1/1. It functions in the pathway amino-acid biosynthesis; L-arginine biosynthesis; N(2)-acetyl-L-ornithine from L-glutamate: step 1/4. Catalyzes two activities which are involved in the cyclic version of arginine biosynthesis: the synthesis of acetylglutamate from glutamate and acetyl-CoA, and of ornithine by transacetylation between acetylornithine and glutamate. The chain is Arginine biosynthesis bifunctional protein ArgJ, mitochondrial from Arthroderma otae (strain ATCC MYA-4605 / CBS 113480) (Microsporum canis).